Here is a 449-residue protein sequence, read N- to C-terminus: Histone PARylation factor 1-like (449 aa).

Residues 3–28 (KEDCKYWDKCYQQNPAHLSKYNHPKK) form a CCHC-type zinc finger. Residues 18–93 (AHLSKYNHPK…AKGSYEAETE (76 aa)) form a disordered region. 2 stretches are compositionally biased toward basic and acidic residues: residues 28–41 (KQQE…EGKK) and 54–69 (EQKK…KDKS). The residue at position 72 (Ser-72) is a Phosphoserine. The Proton donor role is filled by Glu-384.

This sequence belongs to the HPF1 family.

It is found in the chromosome. The protein resides in the nucleus. Its function is as follows. Cofactor for serine ADP-ribosylation that confers serine specificity on Parp. Switches the amino acid specificity of Parp from aspartate or glutamate to serine residues. Acts by completing the active site of Parp: forms a composite active site composed of residues from HPF1/CG1218 and Parp. The chain is Histone PARylation factor 1-like from Drosophila melanogaster (Fruit fly).